A 258-amino-acid chain; its full sequence is UPF0758 protein BamMC406_2419 (258 aa).

The segment at 13 to 42 (CRDPADAPAAPARHTGPARPRKRRPRNWKP) is disordered. Over residues 31-42 (RPRKRRPRNWKP) the composition is skewed to basic residues. An MPN domain is found at 136–258 (QIDSPGAVED…TFSFARAGWL (123 aa)). Residues His-207, His-209, and Asp-220 each coordinate Zn(2+). The short motif at 207-220 (HNHPSGAVQPSAED) is the JAMM motif element.

It belongs to the UPF0758 family.

The chain is UPF0758 protein BamMC406_2419 from Burkholderia ambifaria (strain MC40-6).